Consider the following 153-residue polypeptide: UPF0311 protein Rpal_1987 (153 aa).

It belongs to the UPF0311 family.

The polypeptide is UPF0311 protein Rpal_1987 (Rhodopseudomonas palustris (strain TIE-1)).